The following is a 204-amino-acid chain: FMN-dependent NADH:quinone oxidoreductase (204 aa).

FMN-binding positions include serine 9 and 15–17; that span reads SAS.

Belongs to the azoreductase type 1 family. As to quaternary structure, homodimer. FMN serves as cofactor.

It carries out the reaction 2 a quinone + NADH + H(+) = 2 a 1,4-benzosemiquinone + NAD(+). The enzyme catalyses N,N-dimethyl-1,4-phenylenediamine + anthranilate + 2 NAD(+) = 2-(4-dimethylaminophenyl)diazenylbenzoate + 2 NADH + 2 H(+). Its function is as follows. Quinone reductase that provides resistance to thiol-specific stress caused by electrophilic quinones. In terms of biological role, also exhibits azoreductase activity. Catalyzes the reductive cleavage of the azo bond in aromatic azo compounds to the corresponding amines. The sequence is that of FMN-dependent NADH:quinone oxidoreductase from Xanthomonas campestris pv. campestris (strain ATCC 33913 / DSM 3586 / NCPPB 528 / LMG 568 / P 25).